A 49-amino-acid chain; its full sequence is Large ribosomal subunit protein bL33B (49 aa).

This sequence belongs to the bacterial ribosomal protein bL33 family.

The protein is Large ribosomal subunit protein bL33B of Lactobacillus gasseri (strain ATCC 33323 / DSM 20243 / BCRC 14619 / CIP 102991 / JCM 1131 / KCTC 3163 / NCIMB 11718 / NCTC 13722 / AM63).